A 450-amino-acid chain; its full sequence is Tubulin beta-3 chain (450 aa).

GTP is bound by residues glutamine 11, glutamate 69, serine 138, glycine 142, threonine 143, glycine 144, asparagine 204, and asparagine 226. Glutamate 69 is a binding site for Mg(2+). The disordered stretch occupies residues serine 420–tyrosine 450. Over residues threonine 429–tyrosine 450 the composition is skewed to acidic residues.

It belongs to the tubulin family. Dimer of alpha and beta chains. A typical microtubule is a hollow water-filled tube with an outer diameter of 25 nm and an inner diameter of 15 nM. Alpha-beta heterodimers associate head-to-tail to form protofilaments running lengthwise along the microtubule wall with the beta-tubulin subunit facing the microtubule plus end conferring a structural polarity. Microtubules usually have 13 protofilaments but different protofilament numbers can be found in some organisms and specialized cells. It depends on Mg(2+) as a cofactor.

The protein resides in the cytoplasm. It localises to the cytoskeleton. In terms of biological role, tubulin is the major constituent of microtubules, a cylinder consisting of laterally associated linear protofilaments composed of alpha- and beta-tubulin heterodimers. Microtubules grow by the addition of GTP-tubulin dimers to the microtubule end, where a stabilizing cap forms. Below the cap, tubulin dimers are in GDP-bound state, owing to GTPase activity of alpha-tubulin. This chain is Tubulin beta-3 chain (TUBB3), found in Arabidopsis thaliana (Mouse-ear cress).